The chain runs to 1220 residues: Plasma membrane calcium-transporting ATPase 1 (1220 aa).

The residue at position 2 (Gly2) is an N-acetylglycine. Residues 2–105 (GDMANNSVAY…KTFLQLVWEA (104 aa)) are Cytoplasmic-facing. Ser8 and Ser17 each carry phosphoserine. The helical transmembrane segment at 106–126 (LQDVTLIILEIAAIVSLGLSF) threads the bilayer. At 127 to 154 (YQPPEGDNALCGEVSVGEEEGEGETGWI) the chain is on the extracellular side. The chain crosses the membrane as a helical span at residues 155 to 175 (EGAAILLSVVCVVLVTAFNDW). Over 176-366 (SKEKQFRGLQ…KEKSVLQGKL (191 aa)) the chain is Cytoplasmic. Residues 297–356 (EEEKKDEKKKEKKNKKQDGAIENRNKAKAQDGAAMEMQPLKSEEGGDGDEKDKKKANLPK) are disordered. Composition is skewed to basic and acidic residues over residues 312–325 (KQDG…KAKA) and 337–356 (KSEE…NLPK). A Phosphoserine modification is found at Ser338. Residues 367-386 (TKLAVQIGKAGLLMSAITVI) traverse the membrane as a helical segment. Topologically, residues 387–418 (ILVLYFVIDTFWVQKRPWLAECTPIYIQYFVK) are extracellular. The helical transmembrane segment at 419 to 439 (FFIIGVTVLVVAVPEGLPLAV) threads the bilayer. At 440-855 (TISLAYSVKK…RNVYDSISKF (416 aa)) the chain is on the cytoplasmic side. Residue Asp475 is the 4-aspartylphosphate intermediate of the active site. Residues Asp475, Thr477, and Asp797 each contribute to the Mg(2+) site. Residues 856 to 876 (LQFQLTVNVVAVIVAFTGACI) form a helical membrane-spanning segment. The Extracellular portion of the chain corresponds to 877 to 882 (TQDSPL). A helical membrane pass occupies residues 883-903 (KAVQMLWVNLIMDTLASLALA). At 904–927 (TEPPTESLLLRKPYGRNKPLISRT) the chain is on the cytoplasmic side. Residues 928 to 948 (MMKNILGHAFYQLVVVFTLLF) form a helical membrane-spanning segment. The Extracellular portion of the chain corresponds to 949–971 (AGEKFFDIDSGRNAPLHAPPSEH). A helical membrane pass occupies residues 972-991 (YTIVFNTFVLMQLFNEINAR). At 992 to 1005 (KIHGERNVFEGIFN) the chain is on the cytoplasmic side. A helical transmembrane segment spans residues 1006–1027 (NAIFCTIVLGTFVVQIIIVQFG). Residues 1028 to 1039 (GKPFSCSELSIE) are Extracellular-facing. The helical transmembrane segment at 1040 to 1060 (QWLWSIFLGMGTLLWGQLIST) threads the bilayer. Residues 1061–1220 (IPTSRLKFLK…SPLHSLETSL (160 aa)) lie on the Cytoplasmic side of the membrane. A calmodulin-binding subdomain A region spans residues 1100–1117 (LRRGQILWFRGLNRIQTQ). Thr1116 carries the phosphothreonine; by PKC modification. The segment at 1118-1220 (IRVVNAFRSS…SPLHSLETSL (103 aa)) is required for basolateral membrane targeting. Ser1140 and Ser1155 each carry phosphoserine. Residues 1160–1220 (PLIDDTDAED…SPLHSLETSL (61 aa)) form a disordered region. Thr1165 is modified (phosphothreonine). Phosphoserine is present on residues Ser1178 and Ser1182. A compositionally biased stretch (polar residues) spans 1200–1220 (MNKSATSSSPGSPLHSLETSL).

This sequence belongs to the cation transport ATPase (P-type) (TC 3.A.3) family. Type IIB subfamily. Monomer. Dimer. Oligomer. Calmodulin binding. Interacts with PDZD11. Interacts with SLC35G1 and STIM1. Interacts with YWHAE; interacts with the monomeric and dimeric forms of the YWHAE but prefer the monomer form; this interaction inhibits calcium-transporting ATPase activity. Interacts with NPTN; this interaction stabilizes ATP2B1 and increases ATPase activity; this interaction controls T cell calcium homeostasis following T cell activation. Interacts with EPB41; regulates small intestinal calcium absorption through regulation of membrane expression of ATP2B1. In terms of tissue distribution, expressed in the retina, with strongest expression in the outer plexiform layer and lower expression levels in the inner nuclear layer and the inner plexiform layer. Specifically expressed in the following retinal cell types: photoreceptor cells, cone bipolar cells and horizontal cells. Expressed in osteoclasts (at protein level). Expressed at highest levels in brain, intestine, kidney, and stomach, and at lower levels in liver, lung, aorta, portal vein, urinary bladder, diaphragm, seminal vesicles and testes. Expressed in small intestinal epithelium.

The protein resides in the cell membrane. The protein localises to the basolateral cell membrane. It is found in the synapse. It localises to the presynaptic cell membrane. Its subcellular location is the cytoplasmic vesicle. The protein resides in the secretory vesicle. The protein localises to the synaptic vesicle membrane. It carries out the reaction Ca(2+)(in) + ATP + H2O = Ca(2+)(out) + ADP + phosphate + H(+). In terms of biological role, catalyzes the hydrolysis of ATP coupled with the transport of calcium from the cytoplasm to the extracellular space thereby maintaining intracellular calcium homeostasis. Plays a role in blood pressure regulation through regulation of intracellular calcium concentration and nitric oxide production leading to regulation of vascular smooth muscle cells vasoconstriction. Positively regulates bone mineralization through absorption of calcium from the intestine. Plays dual roles in osteoclast differentiation and survival by regulating RANKL-induced calcium oscillations in preosteoclasts and mediating calcium extrusion in mature osteoclasts. Regulates insulin sensitivity through calcium/calmodulin signaling pathway by regulating AKT1 activation and NOS3 activation in endothelial cells. May play a role in synaptic transmission by modulating calcium and proton dynamics at the synaptic vesicles. In Mus musculus (Mouse), this protein is Plasma membrane calcium-transporting ATPase 1.